A 253-amino-acid chain; its full sequence is Phosphate import ATP-binding protein PstB (253 aa).

One can recognise an ABC transporter domain in the interval 7-248; that stretch reads MHSKGLDFFY…PGNKQTEDYI (242 aa). Residue 39-46 participates in ATP binding; the sequence is GPSGCGKS.

This sequence belongs to the ABC transporter superfamily. Phosphate importer (TC 3.A.1.7) family. In terms of assembly, the complex is composed of two ATP-binding proteins (PstB), two transmembrane proteins (PstC and PstA) and a solute-binding protein (PstS).

Its subcellular location is the cell inner membrane. It carries out the reaction phosphate(out) + ATP + H2O = ADP + 2 phosphate(in) + H(+). Part of the ABC transporter complex PstSACB involved in phosphate import. Responsible for energy coupling to the transport system. The polypeptide is Phosphate import ATP-binding protein PstB (Oleidesulfovibrio alaskensis (strain ATCC BAA-1058 / DSM 17464 / G20) (Desulfovibrio alaskensis)).